Consider the following 155-residue polypeptide: Ribonuclease HI (155 aa).

Residues 1–142 (MTKQVEIFTD…CDELARAAAE (142 aa)) form the RNase H type-1 domain. Positions 10, 48, 70, and 134 each coordinate Mg(2+).

The protein belongs to the RNase H family. As to quaternary structure, monomer. The cofactor is Mg(2+).

It localises to the cytoplasm. The catalysed reaction is Endonucleolytic cleavage to 5'-phosphomonoester.. In terms of biological role, endonuclease that specifically degrades the RNA of RNA-DNA hybrids. This is Ribonuclease HI from Vibrio vulnificus (strain CMCP6).